The sequence spans 617 residues: Hemagglutinin glycoprotein (617 aa).

Topologically, residues 1-37 (MSPQRDRINAFDKDNPHPXXXXXXXXXXXXXXXRPYV) are intravirion. The stalk stretch occupies residues 1-154 (MSPQRDRINA…RIKLDYDQYC (154 aa)). A helical; Signal-anchor for type II membrane protein transmembrane segment spans residues 38–58 (LLAVLFVMFLSLIGLLAIAGI). Residues 59-617 (RFHRAAIYTA…VTREDGTNCR (559 aa)) are Virion surface-facing. N-linked (GlcNAc...) asparagine; by host glycans are attached at residues Asn168, Asn187, Asn200, Asn215, and Asn238. 5 disulfides stabilise this stretch: Cys188–Cys606, Cys287–Cys300, Cys381–Cys494, Cys386–Cys394, and Cys570–Cys579. The interaction with host NECTIN4 receptor stretch occupies residues 458–543 (PMKSLALGVV…VEHAVVYYVY (86 aa)).

This sequence belongs to the paramyxoviruses hemagglutinin-neuraminidase family. Non-sialidase subfamily. Homodimer; disulfide-linked. Further forms homotetramer (dimer of dimers). Interacts (via C-terminus) with human NECTIN4 (via N-terminus); this interaction allows attachment to the respiratory epithelium and viral entry. Interacts (via C-terminus) with human SLAMF1/CD150 (via N-terminus); this interaction allows attachment and viral entry into the CD150-expressing immune cells.

It localises to the virion membrane. The protein localises to the host cell membrane. Attaches the virus to the human SLAMF1/CD150 receptor for entry into host dendritic cells, macrophages, activated memory T cells and naive or memory B cells, thereby explaining the long immunosuppression that follows infection. In the respiratory airways, binds to the NECTIN4 receptor for entry into the host cell. Binding of H protein to the receptor induces a conformational change that allows the F protein to trigger virion/cell membranes fusion. The vaccine and laboratory-adapted strains use host CD46 as an alternate receptor. The high degree of interaction between H and CD46 results in down-regulation of the latter from the surface of infected cells, rendering them more sensitive to c3b-mediated complement lysis. This is Hemagglutinin glycoprotein (H) from Homo sapiens (Human).